The chain runs to 350 residues: tRNA uridine(34) hydroxylase (350 aa).

One can recognise a Rhodanese domain in the interval 146-240; sequence DDPDALFIDM…YARKAREQGL (95 aa). Cysteine 200 functions as the Cysteine persulfide intermediate in the catalytic mechanism.

Belongs to the TrhO family.

The enzyme catalyses uridine(34) in tRNA + AH2 + O2 = 5-hydroxyuridine(34) in tRNA + A + H2O. Its function is as follows. Catalyzes oxygen-dependent 5-hydroxyuridine (ho5U) modification at position 34 in tRNAs. This Escherichia fergusonii (strain ATCC 35469 / DSM 13698 / CCUG 18766 / IAM 14443 / JCM 21226 / LMG 7866 / NBRC 102419 / NCTC 12128 / CDC 0568-73) protein is tRNA uridine(34) hydroxylase.